Consider the following 380-residue polypeptide: Forkhead box protein F1 (380 aa).

Residues 1–19 (MTAEVQQPSVQTPAHSSPM) are compositionally biased toward polar residues. A disordered region spans residues 1 to 49 (MTAEVQQPSVQTPAHSSPMTEKPVQTPVMETSSSSSSTKAKKTNAGIRR). A DNA-binding region (fork-head) is located at residues 52-146 (KPPYSYIALI…EEGSFRRRPR (95 aa)).

The protein localises to the nucleus. The chain is Forkhead box protein F1 (foxf1) from Danio rerio (Zebrafish).